The chain runs to 154 residues: Myoglobin (154 aa).

The Globin domain occupies 2–148; the sequence is GLSDGEWQLV…FRKDIAAKYK (147 aa). Serine 4 bears the Phosphoserine mark. Nitrite is bound at residue histidine 65. Histidine 65 provides a ligand contact to O2. Phosphothreonine is present on threonine 68. Histidine 94 contributes to the heme b binding site.

This sequence belongs to the globin family. In terms of assembly, monomeric.

The protein localises to the cytoplasm. It localises to the sarcoplasm. The catalysed reaction is Fe(III)-heme b-[protein] + nitric oxide + H2O = Fe(II)-heme b-[protein] + nitrite + 2 H(+). It catalyses the reaction H2O2 + AH2 = A + 2 H2O. Its function is as follows. Monomeric heme protein which primary function is to store oxygen and facilitate its diffusion within muscle tissues. Reversibly binds oxygen through a pentacoordinated heme iron and enables its timely and efficient release as needed during periods of heightened demand. Depending on the oxidative conditions of tissues and cells, and in addition to its ability to bind oxygen, it also has a nitrite reductase activity whereby it regulates the production of bioactive nitric oxide. Under stress conditions, like hypoxia and anoxia, it also protects cells against reactive oxygen species thanks to its pseudoperoxidase activity. The sequence is that of Myoglobin (MB) from Castor fiber (Eurasian beaver).